The chain runs to 578 residues: Thrombomodulin (578 aa).

Positions 1-16 are cleaved as a signal peptide; that stretch reads MLRVLLLGVLAPAGLG. Residues 17–518 are Extracellular-facing; that stretch reads LPTPAQPQPR…SPSPVGPVHS (502 aa). A C-type lectin domain is found at 31 to 167; that stretch reads MEHDCFQLFR…CAAEADGFLC (137 aa). N-linked (GlcNAc...) asparagine glycosylation is present at Asn114. 19 disulfides stabilise this stretch: Cys137–Cys158, Cys246–Cys257, Cys253–Cys266, Cys268–Cys281, Cys289–Cys297, Cys293–Cys309, Cys311–Cys324, Cys330–Cys341, Cys337–Cys350, Cys352–Cys363, Cys370–Cys379, Cys375–Cys389, Cys391–Cys405, Cys409–Cys414, Cys418–Cys426, Cys428–Cys440, Cys446–Cys455, Cys451–Cys464, and Cys466–Cys480. EGF-like domains are found at residues 242–282 and 285–325; these read GAWD…RSCA and AEHS…HRCE. N-linked (GlcNAc...) asparagine glycosylation occurs at Asn300. In terms of domain architecture, EGF-like 3; calcium-binding spans 326–364; that stretch reads DVDDCIQVPSLCPQLCVNTRGAFECHCYPGYELVDNECV. Position 343 is a (3R)-3-hydroxyasparagine (Asn343). EGF-like domains are found at residues 366–406 and 405–441; these read PVDP…HRCQ and CQMF…FMCT. Residue Asn410 is glycosylated (N-linked (GlcNAc...) asparagine). Residues 442 to 481 enclose the EGF-like 6; calcium-binding domain; that stretch reads DIDECENGECPEACRNLPGTYECICGPDSPLAGQVATDCG. The disordered stretch occupies residues 483 to 512; the sequence is IISDPDGDSDSGSGEPPVTPTPGVTPSPSP. Residues Ser493 and Ser495 are each glycosylated (O-linked (Xyl...) (chondroitin sulfate) serine). The segment covering 499 to 512 has biased composition (pro residues); sequence PVTPTPGVTPSPSP. The chain crosses the membrane as a helical span at residues 519-539; the sequence is GVLIGISIASLSLVVALLALL. Over 540 to 578 the chain is Cytoplasmic; sequence CHLRKKQGAPRAELEYKCGAPAKEVVLQHVRTEQMPQKL.

As to quaternary structure, interacts with ITGAL, ITGAM and ITGB2. Interacts with thrombin/F2; this interaction switches the specificity of thrombin from a procoagulant to an anticoagulant and antifibrinolytic protease. Interacts with ANGP1 and ANGP2; these interactions significantly inhibit the generation of activated PC and TAFIa/CPB2 by the thrombin/thrombomodulin complex. Interacts with PF4; this interaction enhances generation of activated protein C. Interacts with HMGB1; this interaction inhibits HMGB1 inflammatory activity. In terms of processing, N-glycosylated. Post-translationally, the iron and 2-oxoglutarate dependent 3-hydroxylation of aspartate and asparagine is (R) stereospecific within EGF domains. As to expression, expressed in lung, liver, spleen, kidney, pancreas and lymph node. Low expression in heart, cerebrum, urinary bladder and uterus.

It localises to the membrane. Functionally, endothelial cell receptor that plays a critical role in regulating several physiological processes including hemostasis, coagulation, fibrinolysis, inflammation, and angiogenesis. Acts as a cofactor for thrombin activation of protein C/PROC on the surface of vascular endothelial cells leading to initiation of the activated protein C anticoagulant pathway. Also accelerates the activation of the plasma carboxypeptidase B2/CPB2, which catalyzes removal of C-terminal basic amino acids from its substrates including kinins or anaphylatoxins leading to fibrinolysis inhibition. Plays critical protective roles in changing the cleavage specificity of protease-activated receptor 1/PAR1, inhibiting endothelial cell permeability and inflammation. Suppresses inflammation distinctly from its anticoagulant cofactor activity by sequestering HMGB1 thereby preventing it from engaging cellular receptors such as RAGE and contributing to the inflammatory response. The protein is Thrombomodulin (THBD) of Canis lupus familiaris (Dog).